Here is an 83-residue protein sequence, read N- to C-terminus: UPF0512 protein I (83 aa).

Belongs to the UPF0512 family.

In Dictyostelium discoideum (Social amoeba), this protein is UPF0512 protein I.